Here is a 245-residue protein sequence, read N- to C-terminus: P2Y purinoceptor 13 (245 aa).

The Extracellular portion of the chain corresponds to 1–9 (QLRAFVCRL). Cysteines 7 and 85 form a disulfide. Residues 10-30 (SSVIFYETMYVGIVLLGLIAF) traverse the membrane as a helical segment. Over 31-35 (DRFLK) the chain is Cytoplasmic. Residues 36–56 (IIRPLRNIFLKKTVFAKTVSV) form a helical membrane-spanning segment. Over 57–85 (FIWSFFFFISLPNMILSNKEATPSSVKKC) the chain is Extracellular. The helical transmembrane segment at 86 to 106 (ASLKGPLGLKWHQIVNNISQF) threads the bilayer. The Cytoplasmic segment spans residues 107 to 126 (IFWTVFVLMLVFYVVIAKKV). A helical membrane pass occupies residues 127 to 147 (YDSYRKSKSKDRKNNKKLEGK). The Extracellular segment spans residues 148–174 (VFVVVAVFFVCFAPFHFTRVPYTYSQT). The helical transmembrane segment at 175–195 (NNKTDCRLQNQLFIAKETTLF) threads the bilayer. At 196–245 (LAATNICMDPLIYIFLCKKFTEKLPCMRGRKTIASSQENQSSQTDNITLG) the chain is on the cytoplasmic side.

It belongs to the G-protein coupled receptor 1 family.

It localises to the cell membrane. Receptor for ADP. Coupled to G(i)-proteins. May play a role in hematopoiesis and the immune system. In Macaca fascicularis (Crab-eating macaque), this protein is P2Y purinoceptor 13 (P2RY13).